A 137-amino-acid polypeptide reads, in one-letter code: MEKTLSIIKPDAVKKGVIGKILDRFESNGLRIAAMKKVQLSKEQAENFYAVHKERPFFKDLVEFMISGPVVVSVLEGEGAVLKNRDLMGATNPKEAKAGTIRADFAESIDANAVHGSDSLENAKIEIEFFFKPNEIY.

The ATP site is built by Lys9, Phe57, Arg85, Thr91, Arg102, and Asn112. His115 functions as the Pros-phosphohistidine intermediate in the catalytic mechanism.

This sequence belongs to the NDK family. Homotetramer. Mg(2+) serves as cofactor.

It localises to the cytoplasm. The enzyme catalyses a 2'-deoxyribonucleoside 5'-diphosphate + ATP = a 2'-deoxyribonucleoside 5'-triphosphate + ADP. It catalyses the reaction a ribonucleoside 5'-diphosphate + ATP = a ribonucleoside 5'-triphosphate + ADP. In terms of biological role, major role in the synthesis of nucleoside triphosphates other than ATP. The ATP gamma phosphate is transferred to the NDP beta phosphate via a ping-pong mechanism, using a phosphorylated active-site intermediate. The polypeptide is Nucleoside diphosphate kinase (Campylobacter jejuni subsp. doylei (strain ATCC BAA-1458 / RM4099 / 269.97)).